Consider the following 479-residue polypeptide: Cyclic AMP-responsive element-binding protein 3-like protein 3 (479 aa).

Residues 1 to 317 lie on the Cytoplasmic side of the membrane; the sequence is MDGDIAAGKM…QSTSKPAHAG (317 aa). The disordered stretch occupies residues 67-144; the sequence is CILGPGDSDP…CPEPPRTQVQ (78 aa). Over residues 98–110 the composition is skewed to polar residues; it reads PQDTPPRSGTEPA. In terms of domain architecture, bZIP spans 239 to 302; the sequence is VLKKIRRKIR…LSLLEQLKHL (64 aa). Positions 241–270 are basic motif; the sequence is KKIRRKIRNKQSAQESRKKKKEYIDGLENR. Residues 281 to 302 form a leucine-zipper region; it reads LQRKVLHLEKQNLSLLEQLKHL. Lysine 290 participates in a covalent cross-link: Glycyl lysine isopeptide (Lys-Gly) (interchain with G-Cter in ubiquitin). Residues 318–338 form a helical; Signal-anchor for type II membrane protein membrane-spanning segment; it reads TCIAVLLLSFALIILPSISPF. At 339-479 the chain is on the lumenal side; the sequence is NSNKVDSPGD…RLVQDALGVL (141 aa). N-linked (GlcNAc...) asparagine glycans are attached at residues asparagine 411, asparagine 418, and asparagine 425.

It belongs to the bZIP family. ATF subfamily. As to quaternary structure, binds DNA as a dimer. May form homodimers. Interacts with ATF6. Interacts with SYNV1/HRD1; this interaction leads to CREB3L3 ubiquitination and proteasomal degradation. Following ER stress a fragment containing the cytoplasmic transcription factor domain is released by proteolysis. The cleavage seems to be performed sequentially by site-1 and site-2 proteases. In terms of processing, N-glycosylation is required for optimal proteolytic activation. Post-translationally, ubiquitinated at Lys-290 by SYNV1/HRD1 via 'Lys-27'-linked ubiquitin. As to expression, expressed in adult liver (at protein level) and small intestine.

It is found in the endoplasmic reticulum membrane. It localises to the nucleus. Its function is as follows. Transcription factor that may act during endoplasmic reticulum (ER) stress by activating unfolded protein response target genes. Activated in response to cAMP stimulation. Binds to the cAMP response element (CRE). Activates transcription through box-B element. Activates transcription through CRE. May function synergistically with ATF6. In acute inflammatory response, may activate expression of acute phase response (APR) genes. May be involved in growth suppression. Regulates FGF21 transcription. Plays a crucial role in the regulation of triglyceride metabolism and is required for the maintenance of normal plasma triglyceride concentrations. The chain is Cyclic AMP-responsive element-binding protein 3-like protein 3 (Creb3l3) from Mus musculus (Mouse).